Here is a 327-residue protein sequence, read N- to C-terminus: GrpE protein homolog 2, mitochondrial (327 aa).

A mitochondrion-targeting transit peptide spans 1–39 (MLVLRILSRVTRNAGIRSSLSAVTLPARNQTPVFSSRFH). The interval 68-140 (SSSTSPESDE…DSESDDDELS (73 aa)) is disordered. Composition is skewed to basic and acidic residues over residues 75 to 93 (SDEK…EKPT) and 103 to 113 (SESKDSVTDSA). A compositionally biased stretch (acidic residues) spans 130-140 (SDSESDDDELS).

Belongs to the GrpE family. As to quaternary structure, probable component of the PAM complex, at least composed of SSC1 (mtHsp70), MGE1, TIM44, PAM16/TIM16, PAM17 and PAM18/TIM14. Interacts with SSQ1.

The protein resides in the mitochondrion matrix. Functionally, essential component of the PAM complex, a complex required for the translocation of transit peptide-containing proteins from the inner membrane into the mitochondrial matrix in an ATP-dependent manner. Seems to control the nucleotide-dependent binding of mitochondrial HSP70 to substrate proteins. Binds ATP. Interacts with copper ions Cu(2+). Confers thermotolerance to long-term exposure at moderately high temperature (TMHT at 35 degrees Celsius). In Arabidopsis thaliana (Mouse-ear cress), this protein is GrpE protein homolog 2, mitochondrial.